The chain runs to 251 residues: Probable transcriptional regulatory protein SYO3AOP1_0685 (251 aa).

This sequence belongs to the TACO1 family.

It is found in the cytoplasm. The protein is Probable transcriptional regulatory protein SYO3AOP1_0685 of Sulfurihydrogenibium sp. (strain YO3AOP1).